Here is a 584-residue protein sequence, read N- to C-terminus: Inactive metallocarboxypeptidase ECM14 (584 aa).

The N-terminal stretch at 1 to 20 is a signal peptide; that stretch reads MHLLPVITAVALIYTPLASA. Residues 21–174 constitute a propeptide that is removed on maturation; the sequence is VPSSSNPQFP…QAVYESYPQP (154 aa). Positions 202–524 constitute a Peptidase M14 domain; the sequence is DYQPLSVMTP…NAVLEFGKFL (323 aa). Residues histidine 267 and glutamate 270 each contribute to the Zn(2+) site. Substrate contacts are provided by residues 267-270, arginine 325, and 342-343; these read HARE and DR. Cysteine 336 and cysteine 359 are joined by a disulfide. Asparagine 383 and asparagine 389 each carry an N-linked (GlcNAc...) asparagine glycan. Histidine 399 is a binding site for Zn(2+). Substrate is bound at residue 400 to 401; sequence SY. The disordered stretch occupies residues 564–584; sequence QQLDDEDGEADSHWVLRTQRS.

It belongs to the peptidase M14 family. Requires Zn(2+) as cofactor.

Its subcellular location is the vacuole. It localises to the secreted. Its function is as follows. Inactive carboxypeptidase that may play a role in cell wall organization and biogenesis. The polypeptide is Inactive metallocarboxypeptidase ECM14 (ECM14) (Uncinocarpus reesii (strain UAMH 1704)).